The following is a 248-amino-acid chain: Ribonuclease 3 (248 aa).

One can recognise an RNase III domain in the interval 6–136 (LAYLQTLIGS…LIGAIYLDKG (131 aa)). Glu-49 contacts Mg(2+). Asp-53 is an active-site residue. Residues Asp-122 and Glu-125 each contribute to the Mg(2+) site. Glu-125 is an active-site residue. In terms of domain architecture, DRBM spans 163 to 231 (NYKSCLIEYS…AKEAMERIIA (69 aa)).

It belongs to the ribonuclease III family. As to quaternary structure, homodimer. Requires Mg(2+) as cofactor.

It localises to the cytoplasm. It catalyses the reaction Endonucleolytic cleavage to 5'-phosphomonoester.. Digests double-stranded RNA. Involved in the processing of primary rRNA transcript to yield the immediate precursors to the large and small rRNAs (23S and 16S). Processes some mRNAs, and tRNAs when they are encoded in the rRNA operon. Processes pre-crRNA and tracrRNA of type II CRISPR loci if present in the organism. The chain is Ribonuclease 3 from Chlorobium chlorochromatii (strain CaD3).